Here is a 1048-residue protein sequence, read N- to C-terminus: MGRNKITIEKISNERNRQATFTKRKNGLIKKAMELSILCDCEIAMIVFSSNNKLFQYSSRDMDKLLIRYTDNTDNTRKNLTNQDYNRVFGNKKSKNDDEDGDDDGDEDLGETPTTPHGNLNAHPIGSMENNNNNNNNNNNNNNNNNNNINNNNNNNNNSHHNNNNGNNNNNNNNNNNNNSNNNSNNNNSNNGNSNNNNNGNNANHNMHHHNGNSANISPMQMSQQANNNNSNNNNNNGNNNSNSNSNNNNNSNGYQQQQQAAQQAVQQAQMAQQMHLQQQQQYQQLQHIQQQQQQQHQQQQQNMGPNGYNHQQQQLQHQSPPPPPQQQQQQMQHSQQQQNMNGIIGHHSPVIVGNGVSLLQPSKWSASPYGEDLAPLTPRSASYKGIYGNQYPPQMQPVVNSNNNSNGNSNSMNNGISSPPINQQNQQNQKPPIMNKPGGGGQPMYYDYNGYPQQQQPPQNYNSNGGYWGQNVSSPPPPQQQQSANPYIQQQQQPQHQSPYYHGNYSPQQQSPVLNSQNGHHSSPMHPHQMHHQQHQHQQHPQMQQQQQQQQQHQQHPQMQQIQQQQHPQMQQHQQHQQQHPQMQQQHMNNHQINHHHLNSSPEINSQKNVHSSPLIMNSNNNNNNNNNNHHGNDNNNNNNNNSNNNNNNNNSNNNNNINNNINSNSNNNSNVNNGNNNNSGKVYNNNNNSNNGNNNNNKPEQTIPVKIEKEHSSSPTIPEQPSINVSTSSNSAHVFNNITSNSNNNNNNNNNNNNNNNNTNNNNNNNNNNNNNNNTNNINSNNNSSNTNVNVINNSSSSSTPPISPANINTQSPAISPALVPVVTSLNPQGEETSKPKFKKSLNLSIVIPEVGNSKYPPPQCKLTPINVEATKQPDIPTLPSPRDFYPEINLHHDNVSLTPNYWGGWHQTPRGSLLLTGNGGSNNSNSSNNNNNNNNNNNNTNNNNISGNGSSSSSSSSTQNPNGFLGCLSPRSFNFLNENNNNNNNNSSSGNNNNNNNNNNNNNNNNNNNNNNNNNNNNNNNNNNSNPDESDQSFNRKRKSMEPKN.

Residues 1-61 (MGRNKITIEK…NKLFQYSSRD (61 aa)) enclose the MADS-box domain. The span at 74–85 (DNTRKNLTNQDY) shows a compositional bias: polar residues. 4 disordered regions span residues 74-263 (DNTR…QAAQ), 294-339 (QQQH…QQQQ), 386-812 (GIYG…NINT), and 916-1048 (LLLT…EPKN). Over residues 97 to 110 (DDEDGDDDGDEDLG) the composition is skewed to acidic residues. Low complexity-rich tracts occupy residues 130–205 (NNNN…NANH), 212–263 (GNSA…QAAQ), 294–303 (QQQHQQQQQN), 327–339 (QQQQQMQHSQQQQ), 393–437 (PPQM…IMNK), 446–466 (YYDYNGYPQQQQPPQNYNSNG), and 481–500 (QQQSANPYIQQQQQPQHQSP). Positions 249–304 (NNNSNGYQQQQQAAQQAVQQAQMAQQMHLQQQQQYQQLQHIQQQQQQQHQQQQQNM) form a coiled coil. The span at 506–522 (YSPQQQSPVLNSQNGHH) shows a compositional bias: polar residues. The segment covering 529–539 (HQMHHQQHQHQ) has biased composition (basic residues). Over residues 540–593 (QHPQMQQQQQQQQQHQQHPQMQQIQQQQHPQMQQHQQHQQQHPQMQQQHMNNHQ) the composition is skewed to low complexity. The span at 600–618 (NSSPEINSQKNVHSSPLIM) shows a compositional bias: polar residues. A compositionally biased stretch (low complexity) spans 619–699 (NSNNNNNNNN…NSNNGNNNNN (81 aa)). A compositionally biased stretch (polar residues) spans 715-736 (SSPTIPEQPSINVSTSSNSAHV). Low complexity-rich tracts occupy residues 738–802 (NNIT…SSST), 924–960 (SNNSNSSNNNNNNNNNNNNTNNNNISGNGSSSSSSSS), and 982–1029 (NNNN…NNSN).

The protein resides in the nucleus. In terms of biological role, transcription factor that regulates cell differentiation during development. Seems to negatively regulate prestalk gene expression and positively regulate prespore gene expression. In Dictyostelium discoideum (Social amoeba), this protein is Transcription factor mef2A (mef2A).